The primary structure comprises 283 residues: MEMO1 family protein MK0963 (283 aa).

The protein belongs to the MEMO1 family.

This Methanopyrus kandleri (strain AV19 / DSM 6324 / JCM 9639 / NBRC 100938) protein is MEMO1 family protein MK0963.